Here is a 232-residue protein sequence, read N- to C-terminus: Protein FAM228B (232 aa).

Belongs to the FAM228 family.

The protein is Protein FAM228B (Fam228b) of Mus musculus (Mouse).